The following is a 386-amino-acid chain: Chorismate synthase (386 aa).

NADP(+)-binding residues include arginine 45 and arginine 51. FMN-binding positions include 131–133 (RTS), 251–252 (QG), serine 294, 309–313 (KPIPS), and arginine 335.

The protein belongs to the chorismate synthase family. As to quaternary structure, homotetramer. FMNH2 is required as a cofactor.

It catalyses the reaction 5-O-(1-carboxyvinyl)-3-phosphoshikimate = chorismate + phosphate. It functions in the pathway metabolic intermediate biosynthesis; chorismate biosynthesis; chorismate from D-erythrose 4-phosphate and phosphoenolpyruvate: step 7/7. Functionally, catalyzes the anti-1,4-elimination of the C-3 phosphate and the C-6 proR hydrogen from 5-enolpyruvylshikimate-3-phosphate (EPSP) to yield chorismate, which is the branch point compound that serves as the starting substrate for the three terminal pathways of aromatic amino acid biosynthesis. This reaction introduces a second double bond into the aromatic ring system. The sequence is that of Chorismate synthase from Clostridium tetani (strain Massachusetts / E88).